The sequence spans 1407 residues: YEATS domain-containing protein 2 (1407 aa).

Lysine 9 participates in a covalent cross-link: Glycyl lysine isopeptide (Lys-Gly) (interchain with G-Cter in SUMO2). The stretch at 54–80 (MKNKEHEIDVIDQRLIEARRMMDKLRA) forms a coiled coil. Lysine 113 is covalently cross-linked (Glycyl lysine isopeptide (Lys-Gly) (interchain with G-Cter in SUMO2)). Residues 116-196 (LESPSRSSSP…SHKRELRNAD (81 aa)) are disordered. Phosphoserine occurs at positions 118, 120, and 157. Over residues 119-148 (PSRSSSPTNQRSETPSANHSESDSLSQHND) the composition is skewed to polar residues. Residues 149 to 165 (FLSDKDNNSNVDVEERP) are compositionally biased toward basic and acidic residues. A Glycyl lysine isopeptide (Lys-Gly) (interchain with G-Cter in SUMO2) cross-link involves residue lysine 189. Residues 201–346 (ETSRLFVKKT…EDSVYPQSSE (146 aa)) enclose the YEATS domain. 2 histone H3K27cr binding regions span residues 260 to 262 (HPS) and 283 to 285 (WGE). Threonine 406 carries the phosphothreonine modification. Residues serine 446, serine 462, serine 464, serine 470, and serine 472 each carry the phosphoserine modification. The segment at 462-540 (SGSPISTPSP…GTGSPIPKIH (79 aa)) is disordered. Residue threonine 477 is modified to Phosphothreonine. Lysine 486 participates in a covalent cross-link: Glycyl lysine isopeptide (Lys-Gly) (interchain with G-Cter in SUMO2). The span at 511–520 (STPSTGSPTS) shows a compositional bias: low complexity. Serine 534 carries the post-translational modification Phosphoserine. A Glycyl lysine isopeptide (Lys-Gly) (interchain with G-Cter in SUMO2) cross-link involves residue lysine 550. Serine 573 carries the post-translational modification Phosphoserine. A Glycyl lysine isopeptide (Lys-Gly) (interchain with G-Cter in SUMO2) cross-link involves residue lysine 590. Serine 625 carries the phosphoserine modification. Glycyl lysine isopeptide (Lys-Gly) (interchain with G-Cter in SUMO2) cross-links involve residues lysine 647 and lysine 771. The tract at residues 791 to 833 (SGSAAAGGSGSSGAGGGSGGGGGSGAGGTPSTSGPGGGPQHLT) is disordered. Gly residues predominate over residues 795-829 (AAGGSGSSGAGGGSGGGGGSGAGGTPSTSGPGGGP). Lysine 908 participates in a covalent cross-link: Glycyl lysine isopeptide (Lys-Gly) (interchain with G-Cter in SUMO2). A Glycyl lysine isopeptide (Lys-Gly) (interchain with G-Cter in SUMO1); alternate cross-link involves residue lysine 1095. Lysine 1095 is covalently cross-linked (Glycyl lysine isopeptide (Lys-Gly) (interchain with G-Cter in SUMO2); alternate). Residue lysine 1115 forms a Glycyl lysine isopeptide (Lys-Gly) (interchain with G-Cter in SUMO2) linkage. Position 1204 is a phosphothreonine (threonine 1204). Residues lysine 1207 and lysine 1270 each participate in a glycyl lysine isopeptide (Lys-Gly) (interchain with G-Cter in SUMO2) cross-link.

Component of the ADA2A-containing complex (ATAC), composed of KAT14, KAT2A, TADA2L, TADA3L, ZZ3, MBIP, WDR5, YEATS2, SGF29 and DR1.

It localises to the nucleus. In terms of biological role, chromatin reader component of the ATAC complex, a complex with histone acetyltransferase activity on histones H3 and H4. YEATS2 specifically recognizes and binds histone H3 crotonylated at 'Lys-27' (H3K27cr). Crotonylation marks active promoters and enhancers and confers resistance to transcriptional repressors. The sequence is that of YEATS domain-containing protein 2 from Mus musculus (Mouse).